Here is a 170-residue protein sequence, read N- to C-terminus: Putative pre-16S rRNA nuclease (170 aa).

The segment at methionine 1–leucine 25 is disordered. The segment covering arginine 7 to arginine 21 has biased composition (basic and acidic residues).

Belongs to the YqgF nuclease family.

The protein localises to the cytoplasm. In terms of biological role, could be a nuclease involved in processing of the 5'-end of pre-16S rRNA. The sequence is that of Putative pre-16S rRNA nuclease from Mycobacterium tuberculosis (strain ATCC 25177 / H37Ra).